We begin with the raw amino-acid sequence, 349 residues long: Adenosine deaminase (349 aa).

Residues H25 and H27 each coordinate Zn(2+). Substrate contacts are provided by H27, D29, and G182. H209 lines the Zn(2+) pocket. The Proton donor role is filled by E212. D289 contributes to the Zn(2+) binding site.

Belongs to the metallo-dependent hydrolases superfamily. Adenosine and AMP deaminases family. Adenosine deaminase subfamily. It depends on Zn(2+) as a cofactor.

It carries out the reaction adenosine + H2O + H(+) = inosine + NH4(+). The catalysed reaction is 2'-deoxyadenosine + H2O + H(+) = 2'-deoxyinosine + NH4(+). In terms of biological role, catalyzes the hydrolytic deamination of adenosine and 2-deoxyadenosine. This Streptococcus mutans serotype c (strain ATCC 700610 / UA159) protein is Adenosine deaminase.